Here is a 61-residue protein sequence, read N- to C-terminus: Large ribosomal subunit protein uL30 (61 aa).

Belongs to the universal ribosomal protein uL30 family. Part of the 50S ribosomal subunit.

This chain is Large ribosomal subunit protein uL30, found in Bifidobacterium longum (strain DJO10A).